Reading from the N-terminus, the 383-residue chain is Adaptive-response sensory kinase SasA (383 aa).

Positions 152 to 365 (MVAHELRTPL…CFTFNVPIWQ (214 aa)) constitute a Histidine kinase domain. At histidine 155 the chain carries Phosphohistidine; by autocatalysis.

In terms of assembly, homooligomerizes. Interacts with KaiC. Participates in the KaiABC clock complex, whose core is composed of a KaiC homohexamer, 6 KaiB and up to 6 KaiA dimers. SasA and KaiB(fs) compete to bind to KaiC.

It catalyses the reaction ATP + protein L-histidine = ADP + protein N-phospho-L-histidine.. Its function is as follows. Member of the two-component regulatory system SasA/RpaA involved in genome-wide circadian gene expression. One of several clock output pathways. Participates in the Kai clock protein complex, the main circadian regulator in cyanobacteria, via its interaction with KaiC. KaiC enhances the autophosphorylation activity of SasA, which then transfers its phosphate group to RpaA to activate it. In addition to its output function, recruits fold-shifted KaiB (KaiB(fs)) to KaiC to cooperatively form the KaiB(6):KaiC(6) complex (independent of SasA kinase activity). Required for robustness of the circadian rhythm of gene expression and is involved in clock output, also required for adaptation to light/dark cycles. This Synechococcus sp. (strain CC9311) protein is Adaptive-response sensory kinase SasA.